The following is a 271-amino-acid chain: GPN-loop GTPase 3 (271 aa).

13-18 (GAGKST) is a binding site for GTP. The short motif at 70–72 (GPN) is the Gly-Pro-Asn (GPN)-loop; involved in dimer interface element. 173–176 (SKLD) contacts GTP.

Belongs to the GPN-loop GTPase family. In terms of assembly, heterodimers with GPN1 or GPN2. Binds to RNA polymerase II (RNAPII).

Small GTPase required for proper nuclear import of RNA polymerase II and III (RNAPII and RNAPIII). May act at an RNAP assembly step prior to nuclear import. This is GPN-loop GTPase 3 from Kluyveromyces lactis (strain ATCC 8585 / CBS 2359 / DSM 70799 / NBRC 1267 / NRRL Y-1140 / WM37) (Yeast).